Reading from the N-terminus, the 196-residue chain is Probable malonic semialdehyde reductase RutE (196 aa).

Belongs to the nitroreductase family. HadB/RutE subfamily. FMN serves as cofactor.

The enzyme catalyses 3-hydroxypropanoate + NADP(+) = 3-oxopropanoate + NADPH + H(+). May reduce toxic product malonic semialdehyde to 3-hydroxypropionic acid, which is excreted. This Escherichia coli O6:H1 (strain CFT073 / ATCC 700928 / UPEC) protein is Probable malonic semialdehyde reductase RutE.